We begin with the raw amino-acid sequence, 171 residues long: Protein-export protein SecB (171 aa).

Belongs to the SecB family. In terms of assembly, homotetramer, a dimer of dimers. One homotetramer interacts with 1 SecA dimer.

The protein resides in the cytoplasm. In terms of biological role, one of the proteins required for the normal export of preproteins out of the cell cytoplasm. It is a molecular chaperone that binds to a subset of precursor proteins, maintaining them in a translocation-competent state. It also specifically binds to its receptor SecA. The protein is Protein-export protein SecB of Histophilus somni (strain 129Pt) (Haemophilus somnus).